Reading from the N-terminus, the 242-residue chain is ATP synthase subunit a (242 aa).

Helical transmembrane passes span 29 to 49 (SSIY…LAFY), 84 to 104 (FIPL…LGMT), 114 to 134 (IIVT…VGFV), 140 to 160 (FLTL…IIVI), 181 to 201 (MAGH…MIYL), and 203 to 223 (FLPI…AILQ).

Belongs to the ATPase A chain family. As to quaternary structure, F-type ATPases have 2 components, CF(1) - the catalytic core - and CF(0) - the membrane proton channel. CF(1) has five subunits: alpha(3), beta(3), gamma(1), delta(1), epsilon(1). CF(0) has three main subunits: a(1), b(2) and c(9-12). The alpha and beta chains form an alternating ring which encloses part of the gamma chain. CF(1) is attached to CF(0) by a central stalk formed by the gamma and epsilon chains, while a peripheral stalk is formed by the delta and b chains.

Its subcellular location is the cell inner membrane. Its function is as follows. Key component of the proton channel; it plays a direct role in the translocation of protons across the membrane. The polypeptide is ATP synthase subunit a (Rickettsia peacockii (strain Rustic)).